The primary structure comprises 311 residues: Geranylgeranyl transferase type-2 subunit beta (311 aa).

5 PFTB repeats span residues 54 to 95, 102 to 143, 150 to 191, 197 to 239, and 246 to 288; these read KERI…AMLD, KDKV…AILG, KNTA…KILN, DEEL…AIIG, and RNQL…SLLQ. Geranylgeranyl diphosphate is bound by residues 176-178 and 218-230; these read HGA and RPEK…YGWW. Residues Asp-224, Cys-226, and His-276 each coordinate Zn(2+).

Belongs to the protein prenyltransferase subunit beta family. Heterodimer of an alpha and a beta subunit. Requires Zn(2+) as cofactor.

It carries out the reaction geranylgeranyl diphosphate + L-cysteinyl-[protein] = S-geranylgeranyl-L-cysteinyl-[protein] + diphosphate. Its function is as follows. Catalyzes the transfer of a geranyl-geranyl moiety from geranyl-geranyl pyrophosphate to proteins having the C-terminal -XCC or -XCXC, where both cysteines may become modified. In Schizosaccharomyces pombe (strain 972 / ATCC 24843) (Fission yeast), this protein is Geranylgeranyl transferase type-2 subunit beta (ptb1).